A 399-amino-acid chain; its full sequence is Ectoine hydrolase (399 aa).

Belongs to the peptidase M24 family.

Its subcellular location is the cytoplasm. It catalyses the reaction L-ectoine + H2O = (2S)-2-acetamido-4-aminobutanoate. In terms of biological role, involved in the degradation of ectoine, which allows H.elongata to utilize ectoine as both a carbon and a nitrogen source for growth. Catalyzes the hydrolysis of ectoine to N-acetyl-L-2,4-diaminobutyric acid (N-Ac-DABA). It can produce both isoforms N-gamma-acetyl-L-2,4-diaminobutyric acid (N-gamma-Ac-DABA) and N-alpha-acetyl-L-2,4-diaminobutyric acid (-Nalpha-Ac-DABA), however N-alpha-Ac-DABA is the essential substrate for the subsequent catabolic enzyme DoeB. This Halomonas elongata (strain ATCC 33173 / DSM 2581 / NBRC 15536 / NCIMB 2198 / 1H9) protein is Ectoine hydrolase.